The following is a 153-amino-acid chain: DNA gyrase inhibitor (153 aa).

Belongs to the DNA gyrase inhibitor family. In terms of assembly, interacts with DNA gyrase.

The protein resides in the cytoplasm. Its function is as follows. Inhibits the supercoiling activity of DNA gyrase. Acts by inhibiting DNA gyrase at an early step, prior to (or at the step of) binding of DNA by the gyrase. It protects cells against toxins that target DNA gyrase, by inhibiting activity of these toxins and reducing the formation of lethal double-strand breaks in the cell. The sequence is that of DNA gyrase inhibitor from Pantoea sp. (strain At-9b).